The following is a 315-amino-acid chain: Probable NAD(P)H-dependent D-xylose reductase xyl1 (315 aa).

Tyr50 (proton donor) is an active-site residue. A substrate-binding site is contributed by His112. Residues 166-167 (SN), 215-224 (SSFGPLSFVE), and 271-281 (KSNDPTRLAQN) each bind NAD(+).

This sequence belongs to the aldo/keto reductase family.

It carries out the reaction xylitol + NAD(+) = D-xylose + NADH + H(+). The catalysed reaction is xylitol + NADP(+) = D-xylose + NADPH + H(+). It functions in the pathway carbohydrate metabolism; D-xylose degradation. In terms of biological role, catalyzes the initial reaction in the xylose utilization pathway by reducing D-xylose into xylitol. Xylose is a major component of hemicelluloses such as xylan. Most fungi utilize D-xylose via three enzymatic reactions, xylose reductase (XR), xylitol dehydrogenase (XDH), and xylulokinase, to form xylulose 5-phosphate, which enters pentose phosphate pathway. This Aspergillus fumigatus (strain ATCC MYA-4609 / CBS 101355 / FGSC A1100 / Af293) (Neosartorya fumigata) protein is Probable NAD(P)H-dependent D-xylose reductase xyl1 (xyl1).